Here is a 149-residue protein sequence, read N- to C-terminus: Nucleoside diphosphate kinase 1 (149 aa).

ATP contacts are provided by Lys-9, Phe-57, Arg-85, Thr-91, Arg-102, and Asn-112. His-115 (pros-phosphohistidine intermediate) is an active-site residue.

It belongs to the NDK family. Requires Mg(2+) as cofactor. In terms of processing, autophosphorylated.

The catalysed reaction is a 2'-deoxyribonucleoside 5'-diphosphate + ATP = a 2'-deoxyribonucleoside 5'-triphosphate + ADP. It catalyses the reaction a ribonucleoside 5'-diphosphate + ATP = a ribonucleoside 5'-triphosphate + ADP. Major role in the synthesis of nucleoside triphosphates other than ATP. The ATP gamma phosphate is transferred to the NDP beta phosphate via a ping-pong mechanism, using a phosphorylated active-site intermediate. Also exhibits a kinase-like activity towards histone H1. This is Nucleoside diphosphate kinase 1 (NDPK1) from Saccharum officinarum (Sugarcane).